The following is a 165-amino-acid chain: Cell division protein SepF (165 aa).

The segment at 23–75 (DEYGDYAGDYETQETAPVATRSSKRESRPAPVSDLSERRRPASGPTGVVAELS) is disordered.

Belongs to the SepF family. Homodimer. Interacts with FtsZ.

It is found in the cytoplasm. Its function is as follows. Cell division protein that is part of the divisome complex and is recruited early to the Z-ring. Probably stimulates Z-ring formation, perhaps through the cross-linking of FtsZ protofilaments. Its function overlaps with FtsA. The sequence is that of Cell division protein SepF from Nocardioides sp. (strain ATCC BAA-499 / JS614).